A 532-amino-acid chain; its full sequence is Putative L-lactate permease (532 aa).

14 helical membrane-spanning segments follow: residues 23 to 43 (ALPSYVALPWVATLVMGVHLL), 56 to 76 (VVSAIIAVQTPITVIFGAILF), 101 to 121 (VAQLMIIGWAFAFMIEGASGF), 129 to 149 (APILVGLGFHPLKVAMLALIM), 152 to 172 (VPVSFGAVGTPTWFGFGALKL), 180 to 200 (IGSITAFIHSIAALIIPLLAL), 213 to 233 (IVFIYISVLGCVVPYFLIAQV), 234 to 254 (NYEFPSLVGGAIGLFISVWAA), 274 to 294 (AGEVVKALFPTGLLIAFLIVT), 346 to 366 (LLYVPALIPFVITVLIAIPFF), 387 to 407 (PFIALIGALVMVNLMLVGGEH), 420 to 440 (ISGSNWTIFSSFLGAIGSFFS), 462 to 482 (GISVALVLALQSVGGAMGNMV), and 508 to 528 (IIPMIIYGIIAALGALFLVPL).

This sequence belongs to the lactate permease family.

The protein localises to the cell inner membrane. Its function is as follows. May play a role in L-lactate transport. The protein is Putative L-lactate permease of Haemophilus influenzae (strain ATCC 51907 / DSM 11121 / KW20 / Rd).